The following is a 280-amino-acid chain: Probable 6-phosphogluconolactonase 2 (280 aa).

It belongs to the glucosamine/galactosamine-6-phosphate isomerase family. 6-phosphogluconolactonase subfamily.

It catalyses the reaction 6-phospho-D-glucono-1,5-lactone + H2O = 6-phospho-D-gluconate + H(+). Its pathway is carbohydrate degradation; pentose phosphate pathway; D-ribulose 5-phosphate from D-glucose 6-phosphate (oxidative stage): step 2/3. Functionally, hydrolysis of 6-phosphogluconolactone to 6-phosphogluconate. In Oryza sativa subsp. indica (Rice), this protein is Probable 6-phosphogluconolactonase 2.